The following is a 542-amino-acid chain: Hydroxylamine reductase (542 aa).

[4Fe-4S] cluster-binding residues include Cys5, Cys8, Cys17, and Cys23. The hybrid [4Fe-2O-2S] cluster site is built by His237, Glu261, Cys305, Cys397, Cys425, Cys450, Glu485, and Lys487. Cys397 carries the cysteine persulfide modification.

This sequence belongs to the HCP family. Requires [4Fe-4S] cluster as cofactor. The cofactor is hybrid [4Fe-2O-2S] cluster.

It localises to the cytoplasm. It carries out the reaction A + NH4(+) + H2O = hydroxylamine + AH2 + H(+). Functionally, catalyzes the reduction of hydroxylamine to form NH(3) and H(2)O. The protein is Hydroxylamine reductase of Acetivibrio thermocellus (strain ATCC 27405 / DSM 1237 / JCM 9322 / NBRC 103400 / NCIMB 10682 / NRRL B-4536 / VPI 7372) (Clostridium thermocellum).